A 61-amino-acid chain; its full sequence is Small ribosomal subunit protein uS14 (61 aa).

The Zn(2+) site is built by Cys-24, Cys-27, Cys-40, and Cys-43.

Belongs to the universal ribosomal protein uS14 family. Zinc-binding uS14 subfamily. Part of the 30S ribosomal subunit. Contacts proteins S3 and S10. Requires Zn(2+) as cofactor.

Its function is as follows. Binds 16S rRNA, required for the assembly of 30S particles and may also be responsible for determining the conformation of the 16S rRNA at the A site. The polypeptide is Small ribosomal subunit protein uS14 (Finegoldia magna (strain ATCC 29328 / DSM 20472 / WAL 2508) (Peptostreptococcus magnus)).